Consider the following 550-residue polypeptide: DNA mismatch repair protein MutL (550 aa).

The protein belongs to the DNA mismatch repair MutL/HexB family.

In terms of biological role, this protein is involved in the repair of mismatches in DNA. It is required for dam-dependent methyl-directed DNA mismatch repair. May act as a 'molecular matchmaker', a protein that promotes the formation of a stable complex between two or more DNA-binding proteins in an ATP-dependent manner without itself being part of a final effector complex. The sequence is that of DNA mismatch repair protein MutL from Microcystis aeruginosa (strain NIES-843 / IAM M-2473).